A 379-amino-acid chain; its full sequence is Dual-specificity RNA methyltransferase RlmN (379 aa).

Residue Glu-90 is the Proton acceptor of the active site. In terms of domain architecture, Radical SAM core spans 96 to 348 (EPSRGTLCVS…TTVRKTRGDD (253 aa)). Cys-103 and Cys-353 are joined by a disulfide. Residues Cys-110, Cys-114, and Cys-117 each coordinate [4Fe-4S] cluster. S-adenosyl-L-methionine is bound by residues 179-180 (GE), Ser-211, 233-235 (SLH), and Asn-310. Residue Cys-353 is the S-methylcysteine intermediate of the active site.

This sequence belongs to the radical SAM superfamily. RlmN family. [4Fe-4S] cluster is required as a cofactor.

It localises to the cytoplasm. The catalysed reaction is adenosine(2503) in 23S rRNA + 2 reduced [2Fe-2S]-[ferredoxin] + 2 S-adenosyl-L-methionine = 2-methyladenosine(2503) in 23S rRNA + 5'-deoxyadenosine + L-methionine + 2 oxidized [2Fe-2S]-[ferredoxin] + S-adenosyl-L-homocysteine. It catalyses the reaction adenosine(37) in tRNA + 2 reduced [2Fe-2S]-[ferredoxin] + 2 S-adenosyl-L-methionine = 2-methyladenosine(37) in tRNA + 5'-deoxyadenosine + L-methionine + 2 oxidized [2Fe-2S]-[ferredoxin] + S-adenosyl-L-homocysteine. In terms of biological role, specifically methylates position 2 of adenine 2503 in 23S rRNA and position 2 of adenine 37 in tRNAs. m2A2503 modification seems to play a crucial role in the proofreading step occurring at the peptidyl transferase center and thus would serve to optimize ribosomal fidelity. In Nitrosomonas europaea (strain ATCC 19718 / CIP 103999 / KCTC 2705 / NBRC 14298), this protein is Dual-specificity RNA methyltransferase RlmN.